A 747-amino-acid polypeptide reads, in one-letter code: Endoglucanase C (747 aa).

The first 37 residues, 1–37, serve as a signal peptide directing secretion; it reads MGHVTSPSKRYPASFKRAGSILGVSIALAAFSNVAAA. Positions 38 to 136 constitute a CBM2 domain; it reads GCEYVVTNSW…TVNGAACTGG (99 aa). 3 disulfide bridges follow: cysteine 39-cysteine 133, cysteine 183-cysteine 214, and cysteine 193-cysteine 208. The CBM10 domain maps to 182–211; that stretch reads QCNWYGTLYPLCVSTTSGWGYENNRSCISP. The interval 226 to 283 is disordered; sequence GSSSPSSISSSSVRSSSSSSVVPPSSSSSSSVPSSSSSSVSSSSVVSSSSSSVSVPGT. Residues 227–281 show a composition bias toward low complexity; that stretch reads SSSPSSISSSSVRSSSSSSVVPPSSSSSSSVPSSSSSSVSSSSVVSSSSSSVSVP. The tract at residues 280 to 747 is catalytic; the sequence is VPGTGVFRVN…TQLLHNMWGL (468 aa). The Proton donor role is filled by glutamate 502. Glutamate 652 serves as the catalytic Nucleophile.

This sequence belongs to the glycosyl hydrolase 5 (cellulase A) family.

The enzyme catalyses Endohydrolysis of (1-&gt;4)-beta-D-glucosidic linkages in cellulose, lichenin and cereal beta-D-glucans.. The polypeptide is Endoglucanase C (celC) (Cellvibrio japonicus (strain Ueda107) (Pseudomonas fluorescens subsp. cellulosa)).